Consider the following 780-residue polypeptide: Subtilisin-like protease SBT5.1 (780 aa).

A signal peptide spans 1–25 (MMRCLTITIMFFMFFFLSVIQKCKS). Residues 26–106 (ETSKSGDYII…VFPDQMLQLH (81 aa)) constitute a propeptide, activation peptide. An Inhibitor I9 domain is found at 33 to 106 (YIIYMGAASS…VFPDQMLQLH (74 aa)). The region spanning 110 to 617 (SWDFLVQESY…AGQVTIFGPS (508 aa)) is the Peptidase S8 domain. D147 acts as the Charge relay system in catalysis. N197 carries N-linked (GlcNAc...) asparagine glycosylation. The active-site Charge relay system is H215. N230 carries N-linked (GlcNAc...) asparagine glycosylation. The PA domain occupies 385–469 (IDANEEAARN…PEDGIQIMSY (85 aa)). N-linked (GlcNAc...) asparagine glycosylation is present at N471. The active-site Charge relay system is S550. N776 is a glycosylation site (N-linked (GlcNAc...) asparagine).

It belongs to the peptidase S8 family.

The protein resides in the secreted. The chain is Subtilisin-like protease SBT5.1 from Arabidopsis thaliana (Mouse-ear cress).